Here is a 316-residue protein sequence, read N- to C-terminus: 4-hydroxy-3-methylbut-2-enyl diphosphate reductase (316 aa).

Cys-12 is a [4Fe-4S] cluster binding site. (2E)-4-hydroxy-3-methylbut-2-enyl diphosphate contacts are provided by His-41 and His-74. Positions 41 and 74 each coordinate dimethylallyl diphosphate. Residues His-41 and His-74 each contribute to the isopentenyl diphosphate site. Cys-96 is a binding site for [4Fe-4S] cluster. His-124 lines the (2E)-4-hydroxy-3-methylbut-2-enyl diphosphate pocket. Dimethylallyl diphosphate is bound at residue His-124. His-124 lines the isopentenyl diphosphate pocket. Glu-126 functions as the Proton donor in the catalytic mechanism. Thr-167 provides a ligand contact to (2E)-4-hydroxy-3-methylbut-2-enyl diphosphate. Residue Cys-197 participates in [4Fe-4S] cluster binding. 4 residues coordinate (2E)-4-hydroxy-3-methylbut-2-enyl diphosphate: Ser-225, Ser-226, Asn-227, and Ser-269. The dimethylallyl diphosphate site is built by Ser-225, Ser-226, Asn-227, and Ser-269. Ser-225, Ser-226, Asn-227, and Ser-269 together coordinate isopentenyl diphosphate.

This sequence belongs to the IspH family. Homodimer. Requires [4Fe-4S] cluster as cofactor.

It catalyses the reaction isopentenyl diphosphate + 2 oxidized [2Fe-2S]-[ferredoxin] + H2O = (2E)-4-hydroxy-3-methylbut-2-enyl diphosphate + 2 reduced [2Fe-2S]-[ferredoxin] + 2 H(+). The enzyme catalyses dimethylallyl diphosphate + 2 oxidized [2Fe-2S]-[ferredoxin] + H2O = (2E)-4-hydroxy-3-methylbut-2-enyl diphosphate + 2 reduced [2Fe-2S]-[ferredoxin] + 2 H(+). It participates in isoprenoid biosynthesis; dimethylallyl diphosphate biosynthesis; dimethylallyl diphosphate from (2E)-4-hydroxy-3-methylbutenyl diphosphate: step 1/1. It functions in the pathway isoprenoid biosynthesis; isopentenyl diphosphate biosynthesis via DXP pathway; isopentenyl diphosphate from 1-deoxy-D-xylulose 5-phosphate: step 6/6. Its function is as follows. Catalyzes the conversion of 1-hydroxy-2-methyl-2-(E)-butenyl 4-diphosphate (HMBPP) into a mixture of isopentenyl diphosphate (IPP) and dimethylallyl diphosphate (DMAPP). Acts in the terminal step of the DOXP/MEP pathway for isoprenoid precursor biosynthesis. This is 4-hydroxy-3-methylbut-2-enyl diphosphate reductase from Sodalis glossinidius (strain morsitans).